Reading from the N-terminus, the 295-residue chain is MEALTTSRVVPVQVPCRKLSSLFANFSCLELRRYPCRGLVSIMNHPKLLRPVTASVQPHELSTLGHEGNIVPSKEILDLWRSVEAVCFDVDSTVCVDEGIDELAEFCGAGKAVAEWTARAMGGSVPFEEALAARLSLFKPSLSKVEEYLDKRPPRLSPGIEELVKKLRANNIDVYLISGGFRQMINPVASILGIPRENIFANNLLFGNSGEFLGFDENEPTSRSGGKAKAVQQIRKGRLYKTMAMIGDGATDLEARKPGGADLFICYAGVQLREAVAANADWLIFKFESLINSLD.

Residues 1-54 (MEALTTSRVVPVQVPCRKLSSLFANFSCLELRRYPCRGLVSIMNHPKLLRPVTA) constitute a chloroplast transit peptide. Asp-89 acts as the Nucleophile in catalysis. Asp-89 and Asp-91 together coordinate Mg(2+). Asp-91 serves as the catalytic Proton donor. Substrate is bound by residues Glu-98, Arg-134, 178–179 (SG), and Lys-227. Asp-248 serves as a coordination point for Mg(2+).

The protein belongs to the HAD-like hydrolase superfamily. SerB family. Mg(2+) is required as a cofactor. As to expression, ubiquitous. Mainly expressed in shoot and root meristems, vasculature, pollen, anthers, carpels and seeds.

The protein resides in the plastid. It is found in the chloroplast. It catalyses the reaction O-phospho-L-serine + H2O = L-serine + phosphate. It carries out the reaction O-phospho-D-serine + H2O = D-serine + phosphate. It functions in the pathway amino-acid biosynthesis; L-serine biosynthesis; L-serine from 3-phospho-D-glycerate: step 3/3. Approximately 60% inhibition of PSP activity is observed in presence of 10 mM serine. Functionally, catalyzes the last step in the plastidial phosphorylated pathway of serine biosynthesis (PPSB). The reaction mechanism proceeds via the formation of a phosphoryl-enzyme intermediates. Required for embryo, pollen and root development. May be required preferentially for serine biosynthesis in non-photosynthetic tissues. The polypeptide is Phosphoserine phosphatase, chloroplastic (PSP) (Arabidopsis thaliana (Mouse-ear cress)).